The primary structure comprises 403 residues: Ribonuclease T2-like (403 aa).

The first 19 residues, 1–19 (MLALILTISICIFLKGSTC), serve as a signal peptide directing secretion. Cystine bridges form between cysteine 36/cysteine 55, cysteine 44/cysteine 91, cysteine 54/cysteine 158, and cysteine 99/cysteine 150. Asparagine 78 carries N-linked (GlcNAc...) asparagine glycosylation. Residues histidine 84, glutamate 143, and histidine 147 contribute to the active site. A glycan (N-linked (GlcNAc...) asparagine) is linked at asparagine 175. A disulfide bridge connects residues cysteine 224 and cysteine 259. The interval 268-288 (PKNGFNPGPQPPKSPRKGYLE) is disordered.

Belongs to the RNase T2 family.

It localises to the vacuole lumen. The protein localises to the cytoplasm. It carries out the reaction a ribonucleotidyl-ribonucleotide-RNA + H2O = a 3'-end 3'-phospho-ribonucleotide-RNA + a 5'-end dephospho-ribonucleoside-RNA + H(+). Rnase which modulates cell survival under stress conditions. Released from the vacuole to the cytoplasm during stress to promote tRNA and rRNA cleavage and to activate separately a downstream pathway that promotes cell death. Involved in cell size, vacuolar morphology and growth at high temperatures and high salt concentration. The polypeptide is Ribonuclease T2-like (RNY1) (Debaryomyces hansenii (strain ATCC 36239 / CBS 767 / BCRC 21394 / JCM 1990 / NBRC 0083 / IGC 2968) (Yeast)).